A 434-amino-acid polypeptide reads, in one-letter code: Glutamate-1-semialdehyde 2,1-aminomutase 1 (434 aa).

Lysine 270 is modified (N6-(pyridoxal phosphate)lysine).

Belongs to the class-III pyridoxal-phosphate-dependent aminotransferase family. HemL subfamily. In terms of assembly, homodimer. Pyridoxal 5'-phosphate serves as cofactor.

The protein localises to the cytoplasm. The catalysed reaction is (S)-4-amino-5-oxopentanoate = 5-aminolevulinate. The protein operates within porphyrin-containing compound metabolism; protoporphyrin-IX biosynthesis; 5-aminolevulinate from L-glutamyl-tRNA(Glu): step 2/2. The chain is Glutamate-1-semialdehyde 2,1-aminomutase 1 from Bacillus anthracis (strain A0248).